Consider the following 109-residue polypeptide: Thiosulfate sulfurtransferase GlpE (109 aa).

The 89-residue stretch at 17-105 folds into the Rhodanese domain; sequence AQGQALLLDI…WQRAYPEEVA (89 aa). Cysteine 65 functions as the Cysteine persulfide intermediate in the catalytic mechanism.

Belongs to the GlpE family.

It localises to the cytoplasm. The catalysed reaction is thiosulfate + hydrogen cyanide = thiocyanate + sulfite + 2 H(+). It carries out the reaction thiosulfate + [thioredoxin]-dithiol = [thioredoxin]-disulfide + hydrogen sulfide + sulfite + 2 H(+). In terms of biological role, transferase that catalyzes the transfer of sulfur from thiosulfate to thiophilic acceptors such as cyanide or dithiols. May function in a CysM-independent thiosulfate assimilation pathway by catalyzing the conversion of thiosulfate to sulfite, which can then be used for L-cysteine biosynthesis. The chain is Thiosulfate sulfurtransferase GlpE from Edwardsiella ictaluri (strain 93-146).